The following is a 480-amino-acid chain: UDP-N-acetylmuramate--L-alanine ligase (480 aa).

Position 115–121 (115–121) interacts with ATP; sequence GTHGKTT.

It belongs to the MurCDEF family.

Its subcellular location is the cytoplasm. The enzyme catalyses UDP-N-acetyl-alpha-D-muramate + L-alanine + ATP = UDP-N-acetyl-alpha-D-muramoyl-L-alanine + ADP + phosphate + H(+). It functions in the pathway cell wall biogenesis; peptidoglycan biosynthesis. Functionally, cell wall formation. The polypeptide is UDP-N-acetylmuramate--L-alanine ligase (Gluconacetobacter diazotrophicus (strain ATCC 49037 / DSM 5601 / CCUG 37298 / CIP 103539 / LMG 7603 / PAl5)).